A 260-amino-acid polypeptide reads, in one-letter code: UPF0246 protein Bcep1808_2308 (260 aa).

Belongs to the UPF0246 family.

The sequence is that of UPF0246 protein Bcep1808_2308 from Burkholderia vietnamiensis (strain G4 / LMG 22486) (Burkholderia cepacia (strain R1808)).